Reading from the N-terminus, the 253-residue chain is Isoprenyl transferase (253 aa).

The active site involves aspartate 32. Aspartate 32 contributes to the Mg(2+) binding site. Residues glycine 33–arginine 36, tryptophan 37, arginine 45, histidine 49, and serine 77–glutamate 79 each bind substrate. The active-site Proton acceptor is the asparagine 80. Substrate is bound by residues tryptophan 81, arginine 83, arginine 200, and arginine 206 to serine 208. Glutamate 219 is a binding site for Mg(2+).

It belongs to the UPP synthase family. As to quaternary structure, homodimer. It depends on Mg(2+) as a cofactor.

In terms of biological role, catalyzes the condensation of isopentenyl diphosphate (IPP) with allylic pyrophosphates generating different type of terpenoids. The polypeptide is Isoprenyl transferase (Clostridium perfringens (strain 13 / Type A)).